A 350-amino-acid polypeptide reads, in one-letter code: UDP-3-O-acylglucosamine N-acyltransferase (350 aa).

His248 functions as the Proton acceptor in the catalytic mechanism.

The protein belongs to the transferase hexapeptide repeat family. LpxD subfamily. Homotrimer.

The enzyme catalyses a UDP-3-O-[(3R)-3-hydroxyacyl]-alpha-D-glucosamine + a (3R)-hydroxyacyl-[ACP] = a UDP-2-N,3-O-bis[(3R)-3-hydroxyacyl]-alpha-D-glucosamine + holo-[ACP] + H(+). It functions in the pathway bacterial outer membrane biogenesis; LPS lipid A biosynthesis. Functionally, catalyzes the N-acylation of UDP-3-O-acylglucosamine using 3-hydroxyacyl-ACP as the acyl donor. Is involved in the biosynthesis of lipid A, a phosphorylated glycolipid that anchors the lipopolysaccharide to the outer membrane of the cell. This is UDP-3-O-acylglucosamine N-acyltransferase from Nostoc punctiforme (strain ATCC 29133 / PCC 73102).